A 418-amino-acid polypeptide reads, in one-letter code: Deubiquitinase and deneddylase Dub1 (418 aa).

Residues 1-10 (MLSPTNSISK) are compositionally biased toward polar residues. Residues 1–23 (MLSPTNSISKTAPVPPQDSSKPV) form a disordered region. A helical membrane pass occupies residues 40–60 (TALAVLLVVVTLGLILLFYSF). The segment at 72–144 (TRPSTKEQPT…PLPPKAPKPV (73 aa)) is disordered. Residues 86–141 (VPLPSPPLAVPRPSTPPPPVISRPSTPPAPTPAISPPSTPSAPKPSTPPPLPPKAP) are compositionally biased toward pro residues. Catalysis depends on residues H288, D305, and C358.

The protein belongs to the peptidase C48 family.

It localises to the secreted. The protein localises to the host cell. Its subcellular location is the membrane. Its function is as follows. Effector proteins function to alter host cell physiology and promote bacterial survival in host tissues. This protease possesses deubiquitinating and deneddylating activities. This Chlamydia trachomatis serovar B (strain TZ1A828/OT) protein is Deubiquitinase and deneddylase Dub1 (cdu1).